The following is a 426-amino-acid chain: 5-methylthioadenosine/S-adenosylhomocysteine deaminase (426 aa).

Zn(2+) is bound by residues histidine 60 and histidine 62. Positions 89 and 179 each coordinate substrate. A Zn(2+)-binding site is contributed by histidine 206. Residues glutamate 209 and aspartate 294 each contribute to the substrate site. Aspartate 294 serves as a coordination point for Zn(2+).

This sequence belongs to the metallo-dependent hydrolases superfamily. MTA/SAH deaminase family. Zn(2+) serves as cofactor.

It carries out the reaction S-adenosyl-L-homocysteine + H2O + H(+) = S-inosyl-L-homocysteine + NH4(+). It catalyses the reaction S-methyl-5'-thioadenosine + H2O + H(+) = S-methyl-5'-thioinosine + NH4(+). Catalyzes the deamination of 5-methylthioadenosine and S-adenosyl-L-homocysteine into 5-methylthioinosine and S-inosyl-L-homocysteine, respectively. Is also able to deaminate adenosine. This is 5-methylthioadenosine/S-adenosylhomocysteine deaminase from Dictyoglomus thermophilum (strain ATCC 35947 / DSM 3960 / H-6-12).